The chain runs to 318 residues: Putative 2-hydroxyacid dehydrogenase SH0752 (318 aa).

NAD(+) contacts are provided by residues 155–156 (EI), 234–236 (AGR), and Asp260. Arg236 is a catalytic residue. Residue Glu265 is part of the active site. The active-site Proton donor is the His283. Residue 283–286 (HIGN) participates in NAD(+) binding.

Belongs to the D-isomer specific 2-hydroxyacid dehydrogenase family.

The protein is Putative 2-hydroxyacid dehydrogenase SH0752 of Staphylococcus haemolyticus (strain JCSC1435).